The sequence spans 88 residues: MEQQSYTIIDETGIHARPATMLVQTASKFDSDIQLEYNGKKVNLKSIMGVMSLGVGKDAEITIYADGSDEADAIQAITDVLSKEGLTE.

The HPr domain occupies M1 to E88. Residue H15 is the Pros-phosphohistidine intermediate of the active site. A Phosphoserine; by HPrK/P modification is found at S46.

The protein belongs to the HPr family.

Its subcellular location is the cytoplasm. Phosphorylation on Ser-46 inhibits the phosphoryl transfer from enzyme I to HPr. Its function is as follows. General (non sugar-specific) component of the phosphoenolpyruvate-dependent sugar phosphotransferase system (sugar PTS). This major carbohydrate active-transport system catalyzes the phosphorylation of incoming sugar substrates concomitantly with their translocation across the cell membrane. The phosphoryl group from phosphoenolpyruvate (PEP) is transferred to the phosphoryl carrier protein HPr by enzyme I. Phospho-HPr then transfers it to the PTS EIIA domain. P-Ser-HPr interacts with the catabolite control protein A (CcpA), forming a complex that binds to DNA at the catabolite response elements cre, operator sites preceding a large number of catabolite-regulated genes. Thus, P-Ser-HPr is a corepressor in carbon catabolite repression (CCR), a mechanism that allows bacteria to coordinate and optimize the utilization of available carbon sources. P-Ser-HPr also plays a role in inducer exclusion, in which it probably interacts with several non-PTS permeases and inhibits their transport activity. This chain is Phosphocarrier protein HPr (ptsH), found in Staphylococcus carnosus.